A 356-amino-acid chain; its full sequence is Guanine nucleotide-binding protein alpha-2 subunit (356 aa).

Residues 1–25 are disordered; sequence MGLCQSEEEKVGSQKSRAIDKEIKQ. A lipid anchor (N-myristoyl glycine) is attached at Gly-2. Cys-4 is lipidated: S-palmitoyl cysteine. Residues 7-25 are compositionally biased toward basic and acidic residues; it reads EEEKVGSQKSRAIDKEIKQ. Positions 14-338 constitute a G-alpha domain; the sequence is QKSRAIDKEI…TDTNQVQKIL (325 aa). Residues 17–30 are G1 motif; that stretch reads RAIDKEIKQNQSND. GTP-binding residues include Gln-25, Gln-27, Ser-28, Asn-29, Asp-30, Val-135, Glu-160, Ala-166, Val-188, Glu-254, Ser-255, Cys-257, and Phe-310. Asn-29 lines the Mg(2+) pocket. The tract at residues 158–166 is G2 motif; the sequence is FFENLDRIA. Ala-166 serves as a coordination point for Mg(2+). A G3 motif region spans residues 181–190; sequence RTKTTGIVEV. Residues 250 to 257 form a G4 motif region; it reads MRLFESIC. A G5 motif region spans residues 308–313; the sequence is QKFEAL.

Belongs to the G-alpha family. G(q) subfamily. As to quaternary structure, g proteins are composed of 3 units; alpha, beta and gamma. The alpha chain contains the guanine nucleotide binding site. Mg(2+) serves as cofactor.

Its function is as follows. Guanine nucleotide-binding proteins (G proteins) are involved as modulators or transducers in various transmembrane signaling systems. Involved in behavioral responses to P.aeruginosa by controlling the expression of daf-7, a member of the TGF-beta family, in ASJ sensory neurons. The protein is Guanine nucleotide-binding protein alpha-2 subunit (gpa-2) of Caenorhabditis briggsae.